The primary structure comprises 296 residues: Small ribosomal subunit protein uS2m (296 aa).

The interval 274–296 (QGQKEPGDQGPAHPPGADMSHSL) is disordered.

Belongs to the universal ribosomal protein uS2 family. Component of the mitochondrial small ribosomal subunit (mt-SSU). Mature mammalian 55S mitochondrial ribosomes consist of a small (28S) and a large (39S) subunit. The 28S small subunit contains a 12S ribosomal RNA (12S mt-rRNA) and 30 different proteins. The 39S large subunit contains a 16S rRNA (16S mt-rRNA), a copy of mitochondrial valine transfer RNA (mt-tRNA(Val)), which plays an integral structural role, and 52 different proteins.

The protein resides in the mitochondrion. In terms of biological role, required for mitoribosome formation and stability, and mitochondrial translation. The sequence is that of Small ribosomal subunit protein uS2m (MRPS2) from Homo sapiens (Human).